A 515-amino-acid chain; its full sequence is MEKFEGYSEKQKSRQHYFVYPLLFQEYIYAFAHDYGLNGSEPVEIFGCNNKKFSSILVKRLIIRMYQQNFWINSVNYPNQDRLFDHRNYFYSEFYSQILSEGFGIVVEIPLSLGQLSCPEEKEIPKFQNLQSIHSIFPFLEDKFLHLHYLSHIEIPYPIHLEILVQLLEYRIQDVPSLHLLRFFLHYYSNWNSLITSMKSIFLLKKENKRLFRFLYNSYVSEYEFFLLFLRKQSSCLRLTSSGTFLERIIFSGKMEHFGVMYPGFFRKTIWFFMDPLMHYVRYQGKAILASKGTLLLKKKWKSYLVNFSQYFFSFWTQPQRIRLNQLTNSCFDFLGYLSSVPINTLLVRNQMLENSFLIDTRMKKFDTTVPATPLVGSLSKAQFCTGSGHPISKPVWTDLSDWDILDRFGRICRNLFHYYSGSSKKQTLYRLKYILRLSCARTLARKHKSTVRTFMQRLGLVFLEEFFTEEEQVFSLMFTKTKTIHFSFHGSQSERIWYLDIIRINDLVNPLTLN.

This sequence belongs to the intron maturase 2 family. MatK subfamily.

It is found in the plastid. It localises to the chloroplast. Usually encoded in the trnK tRNA gene intron. Probably assists in splicing its own and other chloroplast group II introns. The polypeptide is Maturase K (Sorghum bicolor (Sorghum)).